Reading from the N-terminus, the 544-residue chain is Methionine--tRNA ligase (544 aa).

Positions Pro10–His20 match the 'HIGH' region motif. 4 residues coordinate Zn(2+): Cys141, Cys144, Cys153, and Cys156. The 'KMSKS' region signature appears at Lys329 to Ser333. ATP is bound at residue Thr332.

This sequence belongs to the class-I aminoacyl-tRNA synthetase family. MetG type 1 subfamily. As to quaternary structure, monomer. The cofactor is Zn(2+).

Its subcellular location is the cytoplasm. It carries out the reaction tRNA(Met) + L-methionine + ATP = L-methionyl-tRNA(Met) + AMP + diphosphate. In terms of biological role, is required not only for elongation of protein synthesis but also for the initiation of all mRNA translation through initiator tRNA(fMet) aminoacylation. The protein is Methionine--tRNA ligase of Bacillus cereus (strain Q1).